The following is a 127-amino-acid chain: Vacuolar ATPase assembly integral membrane protein VMA21 (127 aa).

The interval 1 to 28 is disordered; that stretch reads MATRRNPTKESITTSPPPDQQPRQPGEL. Residues 1–45 are Cytoplasmic-facing; the sequence is MATRRNPTKESITTSPPPDQQPRQPGELEHREAIQLRDLPGYPQQ. Residues 46–66 form a helical membrane-spanning segment; it reads VLWKLIIYSIAVLVLPLSAYF. The Lumenal portion of the chain corresponds to 67 to 79; that stretch reads YSVNYVFDGNTTY. The chain crosses the membrane as a helical span at residues 80-100; it reads AGATAAITANLILFSYIVVAM. At 101–127 the chain is on the cytoplasmic side; sequence REDKGDQEQLREQQQLRGNKEETKKMK. The segment at 107–127 is disordered; sequence QEQLREQQQLRGNKEETKKMK. Residues 118-127 are compositionally biased toward basic and acidic residues; that stretch reads GNKEETKKMK. A Prevents secretion from ER motif is present at residues 124-127; it reads KKMK.

Belongs to the VMA21 family.

The protein resides in the endoplasmic reticulum membrane. Its subcellular location is the endoplasmic reticulum-Golgi intermediate compartment membrane. It localises to the cytoplasmic vesicle. It is found in the COPII-coated vesicle membrane. Its function is as follows. Required for the assembly of the V0 complex of the vacuolar ATPase (V-ATPase) in the endoplasmic reticulum. In Coccidioides immitis (strain RS) (Valley fever fungus), this protein is Vacuolar ATPase assembly integral membrane protein VMA21.